The following is a 284-amino-acid chain: Esterase alnB (284 aa).

Active-site charge relay system residues include Ser-93, Asp-226, and His-255.

This sequence belongs to the LovG family.

It participates in polyketide biosynthesis. In terms of biological role, esterase; part of the gene cluster that mediates the biosynthesis of asperlin, a polyketide showing anti-inflammatory, antitumor and antibiotic activities. The first step of the asperlin biosynthesis is the production of the intermediate 2,4,6-octatrienoic acid by the highly redusing polyketide synthase alnA with cleavage of the PKS product by the esterase alnB. 2,4,6-octatrienoic acid is further converted to asperlin via several steps involving the remaining enzymes from the cluster. The chain is Esterase alnB from Emericella nidulans (strain FGSC A4 / ATCC 38163 / CBS 112.46 / NRRL 194 / M139) (Aspergillus nidulans).